Consider the following 120-residue polypeptide: U13-lycotoxin-Ls1d (120 aa).

An N-terminal signal peptide occupies residues 1–16; that stretch reads MKILFVLISILYAVYC. Positions 17 to 54 are excised as a propeptide; that stretch reads FSSEEDVDSAYLANELEPVEDINSEQYAALEPKEEQER. 4 cysteine pairs are disulfide-bonded: Cys-56–Cys-70, Cys-63–Cys-76, Cys-69–Cys-87, and Cys-78–Cys-85. In terms of domain architecture, Agouti spans 56–95; that stretch reads CADMGQDCKDDCDCCLNIATCNCRFGRYFCSCTFGDYQTC.

The protein belongs to the neurotoxin 05 (agouti) family. Post-translationally, contains 6 disulfide bonds. In terms of tissue distribution, expressed by the venom gland.

The protein resides in the secreted. In Lycosa singoriensis (Wolf spider), this protein is U13-lycotoxin-Ls1d.